Here is a 102-residue protein sequence, read N- to C-terminus: Small ribosomal subunit protein uS10 (102 aa).

Belongs to the universal ribosomal protein uS10 family. As to quaternary structure, part of the 30S ribosomal subunit.

In terms of biological role, involved in the binding of tRNA to the ribosomes. The protein is Small ribosomal subunit protein uS10 of Thiobacillus denitrificans (strain ATCC 25259 / T1).